The chain runs to 598 residues: Elongation factor 4 (598 aa).

In terms of domain architecture, tr-type G spans 2–184; the sequence is KNIRNFSIIA…EIVRKIPAPE (183 aa). GTP-binding positions include 14 to 19 and 131 to 134; these read DHGKST and NKID.

This sequence belongs to the TRAFAC class translation factor GTPase superfamily. Classic translation factor GTPase family. LepA subfamily.

The protein resides in the cell inner membrane. The catalysed reaction is GTP + H2O = GDP + phosphate + H(+). Required for accurate and efficient protein synthesis under certain stress conditions. May act as a fidelity factor of the translation reaction, by catalyzing a one-codon backward translocation of tRNAs on improperly translocated ribosomes. Back-translocation proceeds from a post-translocation (POST) complex to a pre-translocation (PRE) complex, thus giving elongation factor G a second chance to translocate the tRNAs correctly. Binds to ribosomes in a GTP-dependent manner. The polypeptide is Elongation factor 4 (Histophilus somni (strain 2336) (Haemophilus somnus)).